We begin with the raw amino-acid sequence, 407 residues long: Queuine tRNA-ribosyltransferase-like protein (407 aa).

The protein belongs to the queuine tRNA-ribosyltransferase family.

The sequence is that of Queuine tRNA-ribosyltransferase-like protein from Plasmodium falciparum (isolate 3D7).